Here is a 241-residue protein sequence, read N- to C-terminus: Small ribosomal subunit protein uS2c (241 aa).

It belongs to the universal ribosomal protein uS2 family.

It localises to the plastid. The protein localises to the chloroplast. The chain is Small ribosomal subunit protein uS2c (rps2) from Porphyra purpurea (Red seaweed).